The following is a 2205-amino-acid chain: Kinesin-related protein 1 (2205 aa).

The Kinesin motor domain occupies 2–355 (NVQVAVRVRP…LRYADSAKKI (354 aa)). 102 to 109 (GQTGSGKS) serves as a coordination point for ATP. Positions 362 to 448 (NEDAQSKLIR…EDRMAALKDM (87 aa)) form a coiled coil. Residues 483–595 (TRIGRSDSEI…LTTGNRVILG (113 aa)) enclose the FHA domain. Residues 525–548 (FMNNNNNKENSSSTTPTSSKSPSK) show a composition bias toward low complexity. 4 disordered regions span residues 525-568 (FMNN…EKKL), 971-993 (SKQQPKLTSSSSSASTTSSSSKN), 1084-1226 (DNPL…TNSA), and 1455-1508 (THQQ…STIV). The segment covering 549-568 (PKSEKEKENNNDDDDGEKKL) has biased composition (basic and acidic residues). Low complexity-rich tracts occupy residues 978-991 (TSSSSSASTTSSSS), 1089-1103 (SSSATPNTPNTPNNS), and 1117-1142 (TPYSNQTNNQQSSSSQPPLPQQQGTP). The segment covering 1143–1164 (YNPQSNNPNVISNAPPTPNSNL) has biased composition (polar residues). Composition is skewed to low complexity over residues 1169–1226 (SLAA…TNSA) and 1455–1492 (THQQQQQNFSSPSSTSPTLVNGESSPKSGRSSNTTSSS). Residues 1523-1616 (EDETSGYLKK…WVQTLDPLRK (94 aa)) form the PH domain. 3 coiled-coil regions span residues 1879 to 1918 (KDESDRLKDQTTQLNSLTTNLRQQMRSLEQTHLQQKETSA), 1946 to 2034 (SAQV…NGMA), and 2075 to 2149 (AHQS…KKKY).

The protein belongs to the TRAFAC class myosin-kinesin ATPase superfamily. Kinesin family. Unc-104 subfamily. Homodimer.

Its subcellular location is the cytoplasm. The protein resides in the cytoskeleton. It localises to the cytoplasmic vesicle membrane. Its function is as follows. Microtubule-associated force-producing protein that plays a role in organelle transport. Its motor activity is directed toward the microtubule's plus end. Transports cytoplasmic vesicles and particularly phosphatidylinositol 4,5-bisphosphate-containing liposomes along microtubules. In Dictyostelium discoideum (Social amoeba), this protein is Kinesin-related protein 1 (kif1).